Reading from the N-terminus, the 365-residue chain is 3-dehydroquinate synthase (365 aa).

NAD(+) is bound by residues 75-80 (DAENGK), 109-113 (GAATD), 133-134 (TT), lysine 146, and lysine 155. 3 residues coordinate Zn(2+): glutamate 188, histidine 253, and histidine 269.

This sequence belongs to the sugar phosphate cyclases superfamily. Dehydroquinate synthase family. Co(2+) serves as cofactor. Zn(2+) is required as a cofactor. The cofactor is NAD(+).

It is found in the cytoplasm. It catalyses the reaction 7-phospho-2-dehydro-3-deoxy-D-arabino-heptonate = 3-dehydroquinate + phosphate. It participates in metabolic intermediate biosynthesis; chorismate biosynthesis; chorismate from D-erythrose 4-phosphate and phosphoenolpyruvate: step 2/7. Catalyzes the conversion of 3-deoxy-D-arabino-heptulosonate 7-phosphate (DAHP) to dehydroquinate (DHQ). The chain is 3-dehydroquinate synthase from Corynebacterium glutamicum (strain R).